The chain runs to 216 residues: 2-hydroxy-3-keto-5-methylthiopentenyl-1-phosphate phosphatase (216 aa).

The protein belongs to the HAD-like hydrolase superfamily. MtnX family.

It carries out the reaction 2-hydroxy-5-methylsulfanyl-3-oxopent-1-enyl phosphate + H2O = 1,2-dihydroxy-5-(methylsulfanyl)pent-1-en-3-one + phosphate. It participates in amino-acid biosynthesis; L-methionine biosynthesis via salvage pathway; L-methionine from S-methyl-5-thio-alpha-D-ribose 1-phosphate: step 4/6. Its function is as follows. Dephosphorylates 2-hydroxy-3-keto-5-methylthiopentenyl-1-phosphate (HK-MTPenyl-1-P) yielding 1,2-dihydroxy-3-keto-5-methylthiopentene (DHK-MTPene). The polypeptide is 2-hydroxy-3-keto-5-methylthiopentenyl-1-phosphate phosphatase (Exiguobacterium sp. (strain ATCC BAA-1283 / AT1b)).